A 275-amino-acid polypeptide reads, in one-letter code: Phosphonoacetaldehyde hydrolase (275 aa).

The active-site Nucleophile is the D15. Mg(2+)-binding residues include D15 and A17. K56 (schiff-base intermediate with substrate) is an active-site residue. D189 contributes to the Mg(2+) binding site.

It belongs to the HAD-like hydrolase superfamily. PhnX family. Homodimer. It depends on Mg(2+) as a cofactor.

It catalyses the reaction phosphonoacetaldehyde + H2O = acetaldehyde + phosphate + H(+). Its function is as follows. Involved in phosphonate degradation. The protein is Phosphonoacetaldehyde hydrolase of Pseudomonas fluorescens (strain SBW25).